A 98-amino-acid polypeptide reads, in one-letter code: Co-chaperonin GroES (98 aa).

The protein belongs to the GroES chaperonin family. As to quaternary structure, heptamer of 7 subunits arranged in a ring. Interacts with the chaperonin GroEL.

The protein localises to the cytoplasm. Its function is as follows. Together with the chaperonin GroEL, plays an essential role in assisting protein folding. The GroEL-GroES system forms a nano-cage that allows encapsulation of the non-native substrate proteins and provides a physical environment optimized to promote and accelerate protein folding. GroES binds to the apical surface of the GroEL ring, thereby capping the opening of the GroEL channel. The sequence is that of Co-chaperonin GroES from Micrococcus luteus (strain ATCC 4698 / DSM 20030 / JCM 1464 / CCM 169 / CCUG 5858 / IAM 1056 / NBRC 3333 / NCIMB 9278 / NCTC 2665 / VKM Ac-2230) (Micrococcus lysodeikticus).